A 201-amino-acid polypeptide reads, in one-letter code: Holliday junction branch migration complex subunit RuvA (201 aa).

The segment at 1–63 (MYDYIKGTVT…EDNISLFGFQ (63 aa)) is domain I. The domain II stretch occupies residues 64–142 (TTEERYLFKK…DVVASEIVYV (79 aa)). Residues 143-153 (APENDMVAGLS) form a flexible linker region. Residues 153–201 (SPQLEEAVLALEALGYSTRELKKVIPKLAKEADLTSDAYIKLALQLMTK) form a domain III region.

Belongs to the RuvA family. As to quaternary structure, homotetramer. Forms an RuvA(8)-RuvB(12)-Holliday junction (HJ) complex. HJ DNA is sandwiched between 2 RuvA tetramers; dsDNA enters through RuvA and exits via RuvB. An RuvB hexamer assembles on each DNA strand where it exits the tetramer. Each RuvB hexamer is contacted by two RuvA subunits (via domain III) on 2 adjacent RuvB subunits; this complex drives branch migration. In the full resolvosome a probable DNA-RuvA(4)-RuvB(12)-RuvC(2) complex forms which resolves the HJ.

Its subcellular location is the cytoplasm. Functionally, the RuvA-RuvB-RuvC complex processes Holliday junction (HJ) DNA during genetic recombination and DNA repair, while the RuvA-RuvB complex plays an important role in the rescue of blocked DNA replication forks via replication fork reversal (RFR). RuvA specifically binds to HJ cruciform DNA, conferring on it an open structure. The RuvB hexamer acts as an ATP-dependent pump, pulling dsDNA into and through the RuvAB complex. HJ branch migration allows RuvC to scan DNA until it finds its consensus sequence, where it cleaves and resolves the cruciform DNA. The polypeptide is Holliday junction branch migration complex subunit RuvA (Listeria monocytogenes serovar 1/2a (strain ATCC BAA-679 / EGD-e)).